The sequence spans 480 residues: Molybdate-anion transporter (480 aa).

The next 12 membrane-spanning stretches (helical) occupy residues 1 to 21 (MFVT…GLEL), 44 to 63 (ATFL…QGPY), 78 to 98 (IAIL…FSGW), 129 to 149 (FVLI…TTTF), 177 to 197 (TWNH…AEWL), 199 to 219 (LGPV…AWFV), 274 to 294 (VMLL…FIFL), 304 to 324 (SPLG…SLLF), 339 to 359 (VLCV…FSTV), 369 to 389 (FLAF…LNFL), 401 to 421 (SVLA…LLAL), and 441 to 461 (FGGC…LFTL).

The protein belongs to the major facilitator superfamily.

The protein localises to the cell membrane. Its function is as follows. Mediates high-affinity intracellular uptake of the rare oligo-element molybdenum. The polypeptide is Molybdate-anion transporter (mfsd5) (Takifugu rubripes (Japanese pufferfish)).